A 723-amino-acid chain; its full sequence is DNA-binding protein RFX2 (723 aa).

The disordered stretch occupies residues 1–46 (MQNSEGGADSPASVALRPSAAAPPVPASPQRVLVQAASSAPKGAQM). The segment covering 10 to 20 (SPASVALRPSA) has biased composition (low complexity). Ser-28 is modified (phosphoserine). A DNA-binding region (RFX-type winged-helix) is located at residues 199 to 274 (HLQWLLDNYE…YHYYGIRLKP (76 aa)). A disordered region spans residues 292–332 (QQPMHQKPRYRPAQKTDSLGDSGSHSSLHSTPEQTMAAQSQ). Over residues 307-322 (TDSLGDSGSHSSLHST) the composition is skewed to low complexity. Polar residues predominate over residues 323–332 (PEQTMAAQSQ). Ser-416 is subject to Phosphoserine. Positions 689–723 (GDERRGSEAGPDAHSLGEPLVKRERSDPNHSLQGI) are disordered.

Belongs to the RFX family. In terms of assembly, homodimer; probably only forms homodimers in testis. Heterodimer; heterodimerizes with RFX1 and RFX3.

The protein localises to the nucleus. The protein resides in the cytoplasm. In terms of biological role, transcription factor that acts as a key regulator of spermatogenesis. Acts by regulating expression of genes required for the haploid phase during spermiogenesis, such as genes required for cilium assembly and function. Recognizes and binds the X-box, a regulatory motif with DNA sequence 5'-GTNRCC(0-3N)RGYAAC-3' present on promoters. Probably activates transcription of the testis-specific histone gene H1-6. In Macaca fascicularis (Crab-eating macaque), this protein is DNA-binding protein RFX2 (RFX2).